A 252-amino-acid chain; its full sequence is Probable transcriptional regulatory protein A1C_04175 (252 aa).

It belongs to the TACO1 family.

The protein localises to the cytoplasm. In Rickettsia akari (strain Hartford), this protein is Probable transcriptional regulatory protein A1C_04175.